We begin with the raw amino-acid sequence, 171 residues long: Photosystem I assembly protein Ycf3 (171 aa).

TPR repeat units follow at residues 35–68 (AFTY…EIDP), 72–105 (SYIL…NPSL), and 120–153 (GEQA…APSN).

This sequence belongs to the Ycf3 family.

It localises to the plastid. The protein localises to the chloroplast thylakoid membrane. Functionally, essential for the assembly of the photosystem I (PSI) complex. May act as a chaperone-like factor to guide the assembly of the PSI subunits. The sequence is that of Photosystem I assembly protein Ycf3 from Angiopteris evecta (Mule's foot fern).